The primary structure comprises 217 residues: uncharacterized protein (217 aa).

Residues 2–216 (LCVKNVSLRL…AQWSENYNKL (215 aa)) enclose the ABC transporter domain. 34 to 41 (GPSGCGKS) is an ATP binding site.

This sequence belongs to the ABC transporter superfamily.

Its function is as follows. Probably part of a binding-protein-dependent transport system YnjCD. Probably responsible for energy coupling to the transport system. This is an uncharacterized protein from Escherichia coli (strain K12).